The chain runs to 537 residues: Oviduct-specific glycoprotein (537 aa).

A signal peptide spans 1 to 18; the sequence is LLLCVGLLLVLKHHDGAA. The GH18 domain maps to 19 to 382; the sequence is HKLVCYFTNW…HTLNNLLVND (364 aa). C23 and C48 are disulfide-bonded. Chitin-binding positions include 68–69, 95–98, Y139, 208–211, and W352; these read PQ, GGWN, and LSYD. N399 carries N-linked (GlcNAc...) asparagine glycosylation. 2 disordered regions span residues 446 to 475 and 498 to 537; these read EIAT…GEKP and TGQK…ERRL. A compositionally biased stretch (basic and acidic residues) spans 528 to 537; sequence GRAETLERRL.

The protein belongs to the glycosyl hydrolase 18 family. As to expression, oviduct.

It is found in the cytoplasmic vesicle. It localises to the secretory vesicle. Functionally, binds to oocyte zona pellucida in vivo. May play a role in the fertilization process and/or early embryonic development. This Bos taurus (Bovine) protein is Oviduct-specific glycoprotein (OVGP1).